Reading from the N-terminus, the 154-residue chain is MAAAWGSSLTAATQRAVTPWPRGRLLTASLGPQARREASSSSPEAGEGQIRLTDSCVQRLLEITEGSEFLRLQVEGGGCSGFQYKFSLDTVINPDDRVFEQGGARVVVDSDSLAFVKGAQVDFSQELIRSSFQVLNNPQAQQGCSCGSSFSIKL.

Residues 1–8 (MAAAWGSS) constitute a mitochondrion transit peptide. The segment at 29-49 (SLGPQARREASSSSPEAGEGQ) is disordered. The segment covering 39-49 (SSSSPEAGEGQ) has biased composition (low complexity). 3 residues coordinate Fe cation: Cys-79, Cys-144, and Cys-146.

The protein belongs to the HesB/IscA family. In terms of assembly, heterotetramer; forms a dimer of dimers with IBA57. Interacts with [2Fe-2S]-ISCA2 forming the heterodimer [2Fe- 2S]-ISCA2-IBA57 complex; [2Fe-2S] cluster binding is absolutely required to promote the complex formation.

It localises to the mitochondrion. In terms of biological role, involved in the maturation of mitochondrial 4Fe-4S proteins functioning late in the iron-sulfur cluster assembly pathway. May be involved in the binding of an intermediate of Fe/S cluster assembly. In Homo sapiens (Human), this protein is Iron-sulfur cluster assembly 2 homolog, mitochondrial (ISCA2).